Reading from the N-terminus, the 654-residue chain is Glycogen debranching enzyme (654 aa).

Catalysis depends on D336, which acts as the Nucleophile. E371 (proton donor) is an active-site residue. A disordered region spans residues 459–484 (EANGEENRDGTNSNYSDNHGKEGLGG).

The protein belongs to the glycosyl hydrolase 13 family.

It carries out the reaction Hydrolysis of (1-&gt;6)-alpha-D-glucosidic linkages to branches with degrees of polymerization of three or four glucose residues in limit dextrin.. It participates in glycan degradation; glycogen degradation. Functionally, removes maltotriose and maltotetraose chains that are attached by 1,6-alpha-linkage to the limit dextrin main chain, generating a debranched limit dextrin. The sequence is that of Glycogen debranching enzyme from Salmonella typhi.